A 234-amino-acid chain; its full sequence is Synaptogyrin-1 (234 aa).

Methionine 1 is subject to N-acetylmethionine. Residues 1 to 23 (MEGGAYGAGKAGGAFDPYTLVRQ) are Cytoplasmic-facing. Residues 20 to 173 (LVRQPHTILR…QAVLAFQRYQ (154 aa)) form the MARVEL domain. A helical transmembrane segment spans residues 24-44 (PHTILRVVSWVFSIVVFGSIV). At 45-71 (NEGYLNNPEEEEEFCIYNRNPNACSYG) the chain is on the lumenal side. Residues 72 to 92 (VTVGVLAFLTCLLYLALDVYF) form a helical membrane-spanning segment. The Cytoplasmic segment spans residues 93 to 103 (PQISSVKDRKK). Residues 104–124 (AVLSDIGVSAFWAFFWFVGFC) form a helical membrane-spanning segment. Residues 125-148 (FLANQWQVSKPKDNPLNEGTDAAR) are Lumenal-facing. A helical membrane pass occupies residues 149–169 (AAIAFSFFSIFTWAGQAVLAF). The Cytoplasmic portion of the chain corresponds to 170–234 (QRYQIGADSA…EPQGYQSQGY (65 aa)). A disordered region spans residues 201–234 (EPSAGSDPAGMGGTYQHPANAFDAEPQGYQSQGY).

It belongs to the synaptogyrin family.

Its subcellular location is the cytoplasmic vesicle. It is found in the secretory vesicle. The protein localises to the synaptic vesicle membrane. It localises to the melanosome. Functionally, may play a role in regulated exocytosis. Modulates the localization of synaptophysin/SYP into synaptic-like microvesicles and may therefore play a role in synaptic-like microvesicle formation and/or maturation. Involved in the regulation of short-term and long-term synaptic plasticity. In Mus musculus (Mouse), this protein is Synaptogyrin-1.